The chain runs to 265 residues: Transcriptional activator AggR (265 aa).

Residues 164–261 (DKVRNTIEKD…GITPKQFLTY (98 aa)) form the HTH araC/xylS-type domain. DNA-binding regions (H-T-H motif) lie at residues 181–202 (AIIA…ESEY) and 228–251 (ISQI…VKHF).

Homodimer.

Functionally, transcriptional activator of aggregative adherence fimbria I expression in enteroaggregative E.coli. The polypeptide is Transcriptional activator AggR (aggR) (Escherichia coli).